The sequence spans 292 residues: 4-hydroxy-tetrahydrodipicolinate synthase (292 aa).

Thr-45 is a pyruvate binding site. Residue Tyr-133 is the Proton donor/acceptor of the active site. Lys-161 (schiff-base intermediate with substrate) is an active-site residue. Ile-203 serves as a coordination point for pyruvate.

It belongs to the DapA family. In terms of assembly, homotetramer; dimer of dimers.

Its subcellular location is the cytoplasm. The catalysed reaction is L-aspartate 4-semialdehyde + pyruvate = (2S,4S)-4-hydroxy-2,3,4,5-tetrahydrodipicolinate + H2O + H(+). Its pathway is amino-acid biosynthesis; L-lysine biosynthesis via DAP pathway; (S)-tetrahydrodipicolinate from L-aspartate: step 3/4. Functionally, catalyzes the condensation of (S)-aspartate-beta-semialdehyde [(S)-ASA] and pyruvate to 4-hydroxy-tetrahydrodipicolinate (HTPA). The protein is 4-hydroxy-tetrahydrodipicolinate synthase of Sodalis glossinidius (strain morsitans).